Consider the following 239-residue polypeptide: Probable 2-phosphosulfolactate phosphatase (239 aa).

The protein belongs to the ComB family. Mg(2+) serves as cofactor.

The catalysed reaction is (2R)-O-phospho-3-sulfolactate + H2O = (2R)-3-sulfolactate + phosphate. In Clostridium botulinum (strain Langeland / NCTC 10281 / Type F), this protein is Probable 2-phosphosulfolactate phosphatase.